A 266-amino-acid polypeptide reads, in one-letter code: Gap junction beta-4 protein (266 aa).

An intramembrane segment occupies 2–13 (NWAFLQGLLSGV). Topologically, residues 14-20 (NKYSTVL) are cytoplasmic. The helical transmembrane segment at 21–40 (SRIWLSVVFIFRVLVYVVAA) threads the bilayer. The Extracellular portion of the chain corresponds to 41–73 (EEVWDDEQKDFVCNTKQPGCPNVCYDEFFPVSH). Disulfide bonds link Cys53–Cys175, Cys60–Cys169, and Cys64–Cys164. Residues 74–94 (VRLWALQLILVTCPSLLVVMH) traverse the membrane as a helical segment. Residues 95 to 130 (VAYREERERKHHLKHGPNAPSLYDNLSKKRGGLWWT) are Cytoplasmic-facing. The chain crosses the membrane as a helical span at residues 131-151 (YLLSLIFKAAVDAGFLYIFHR). At 152 to 184 (LYKDYDMPRVVACSVEPCPHTVDCYISRPTEKK) the chain is on the extracellular side. The helical transmembrane segment at 185–205 (VFTYFMVTTAAICILLNLSEV) threads the bilayer. At 206-266 (FYLVGKRCME…SAPVDAGGYP (61 aa)) the chain is on the cytoplasmic side.

It belongs to the connexin family. Beta-type (group I) subfamily. In terms of assembly, a hemichannel or connexon is composed of a hexamer of connexins. A functional gap junction is formed by the apposition of two hemichannels. Forms heteromeric channels with GJB2.

The protein resides in the cell membrane. It localises to the cell junction. Its subcellular location is the gap junction. In terms of biological role, structural component of gap junctions. Gap junctions are dodecameric channels that connect the cytoplasm of adjoining cells. They are formed by the docking of two hexameric hemichannels, one from each cell membrane. Small molecules and ions diffuse from one cell to a neighboring cell via the central pore. The polypeptide is Gap junction beta-4 protein (GJB4) (Homo sapiens (Human)).